The chain runs to 130 residues: Small ribosomal subunit protein uS9 (130 aa).

This sequence belongs to the universal ribosomal protein uS9 family.

The polypeptide is Small ribosomal subunit protein uS9 (Brevibacillus brevis (strain 47 / JCM 6285 / NBRC 100599)).